Consider the following 483-residue polypeptide: Bifunctional protein HldE (483 aa).

Positions 1–327 are ribokinase; the sequence is MDDALAHLPR…ACASSAQGEP (327 aa). 201-204 contacts ATP; the sequence is NRKE. Asp272 is an active-site residue. The tract at residues 354 to 483 is cytidylyltransferase; the sequence is FTNGCFDLLH…TTNLIARMNS (130 aa).

This sequence in the N-terminal section; belongs to the carbohydrate kinase PfkB family. It in the C-terminal section; belongs to the cytidylyltransferase family. As to quaternary structure, homodimer.

It catalyses the reaction D-glycero-beta-D-manno-heptose 7-phosphate + ATP = D-glycero-beta-D-manno-heptose 1,7-bisphosphate + ADP + H(+). The catalysed reaction is D-glycero-beta-D-manno-heptose 1-phosphate + ATP + H(+) = ADP-D-glycero-beta-D-manno-heptose + diphosphate. Its pathway is nucleotide-sugar biosynthesis; ADP-L-glycero-beta-D-manno-heptose biosynthesis; ADP-L-glycero-beta-D-manno-heptose from D-glycero-beta-D-manno-heptose 7-phosphate: step 1/4. The protein operates within nucleotide-sugar biosynthesis; ADP-L-glycero-beta-D-manno-heptose biosynthesis; ADP-L-glycero-beta-D-manno-heptose from D-glycero-beta-D-manno-heptose 7-phosphate: step 3/4. Catalyzes the phosphorylation of D-glycero-D-manno-heptose 7-phosphate at the C-1 position to selectively form D-glycero-beta-D-manno-heptose-1,7-bisphosphate. In terms of biological role, catalyzes the ADP transfer from ATP to D-glycero-beta-D-manno-heptose 1-phosphate, yielding ADP-D-glycero-beta-D-manno-heptose. This chain is Bifunctional protein HldE, found in Caulobacter vibrioides (strain ATCC 19089 / CIP 103742 / CB 15) (Caulobacter crescentus).